Consider the following 317-residue polypeptide: MNKFKGNKVVLIGNGAVGSSYAFSLVNQSIVDELVIIDLDTEKVRGDVMDLKHATPYSPTTVRVKAGEYSDCHDADLVVICAGAAQKPGETRLDLVSKNLKIFKSIVGEVMASKFDGIFLVATNPVDILAYATWKFSGLPKERVIGSGTILDSARFRLLLSEAFDVAPRSVDAQIIGEHGDTELPVWSHANIAGQPLKTLLEQRPEGKAQIEQIFVQTRDAAYDIIQAKGATYYGVAMGLARITEAIFRNEDAVLTVSALLEGEYEEEDVYIGVPAVINRNGIRNVVEIPLNDEEQSKFAHSAKTLKDIMAEAEELK.

Residues valine 17, aspartate 38, lysine 43, tyrosine 69, and 83 to 84 (GA) contribute to the NAD(+) site. Residues glutamine 86 and arginine 92 each contribute to the substrate site. NAD(+) contacts are provided by residues serine 105, 122 to 124 (ATN), and serine 147. 124 to 127 (NPVD) is a substrate binding site. Residue 152–155 (DSAR) coordinates substrate. The Proton acceptor role is filled by histidine 179. Tyrosine 223 carries the phosphotyrosine modification. Threonine 232 contributes to the substrate binding site.

This sequence belongs to the LDH/MDH superfamily. LDH family. Homotetramer.

It localises to the cytoplasm. The enzyme catalyses (S)-lactate + NAD(+) = pyruvate + NADH + H(+). The protein operates within fermentation; pyruvate fermentation to lactate; (S)-lactate from pyruvate: step 1/1. Catalyzes the conversion of lactate to pyruvate (Potential). Appears to be the primary factor that allows S.aureus growth during nitrosative stress in both aerobically and anaerobically cultured cells. In Staphylococcus aureus (strain USA300), this protein is L-lactate dehydrogenase 1.